Reading from the N-terminus, the 192-residue chain is Guanylate kinase (192 aa).

In terms of domain architecture, Guanylate kinase-like spans Gly-7 to Val-185. ATP is bound at residue Ser-14–Ser-21.

The protein belongs to the guanylate kinase family.

It is found in the cytoplasm. The enzyme catalyses GMP + ATP = GDP + ADP. Functionally, essential for recycling GMP and indirectly, cGMP. This chain is Guanylate kinase, found in Rickettsia felis (strain ATCC VR-1525 / URRWXCal2) (Rickettsia azadi).